A 182-amino-acid chain; its full sequence is Peptidyl-tRNA hydrolase (182 aa).

Residue tyrosine 14 coordinates tRNA. Histidine 19 functions as the Proton acceptor in the catalytic mechanism. TRNA-binding residues include phenylalanine 64, asparagine 66, and asparagine 112.

It belongs to the PTH family. As to quaternary structure, monomer.

The protein localises to the cytoplasm. It carries out the reaction an N-acyl-L-alpha-aminoacyl-tRNA + H2O = an N-acyl-L-amino acid + a tRNA + H(+). In terms of biological role, hydrolyzes ribosome-free peptidyl-tRNAs (with 1 or more amino acids incorporated), which drop off the ribosome during protein synthesis, or as a result of ribosome stalling. Functionally, catalyzes the release of premature peptidyl moieties from peptidyl-tRNA molecules trapped in stalled 50S ribosomal subunits, and thus maintains levels of free tRNAs and 50S ribosomes. In Wolbachia sp. subsp. Drosophila simulans (strain wRi), this protein is Peptidyl-tRNA hydrolase.